The following is a 357-amino-acid chain: Protein-arginine kinase (357 aa).

A Phosphagen kinase C-terminal domain is found at 24–256; the sequence is VIISSRVRLA…LQLVTQERAA (233 aa). Residues 27-31, His-93, Arg-127, 178-182, and 209-214 each bind ATP; these read SSRVR, RASVM, and RGLYGE. An RDXXRA motif of the pArg binding pocket involved in allosteric regulation motif is present at residues 339–344; that stretch reads RDIFRA.

It belongs to the ATP:guanido phosphotransferase family.

It carries out the reaction L-arginyl-[protein] + ATP = N(omega)-phospho-L-arginyl-[protein] + ADP + H(+). With respect to regulation, appears to be allosterically activated by the binding of pArg-containing polypeptides to the pArg-binding pocket localized in the C-terminal domain of McsB. Functionally, catalyzes the specific phosphorylation of arginine residues in proteins. This chain is Protein-arginine kinase, found in Desulforamulus reducens (strain ATCC BAA-1160 / DSM 100696 / MI-1) (Desulfotomaculum reducens).